The following is a 336-amino-acid chain: Uroporphyrinogen decarboxylase (336 aa).

Substrate contacts are provided by residues 24-28 (RQVGR), D73, Y142, S197, and H312.

It belongs to the uroporphyrinogen decarboxylase family. As to quaternary structure, homodimer.

It localises to the cytoplasm. The enzyme catalyses uroporphyrinogen III + 4 H(+) = coproporphyrinogen III + 4 CO2. It functions in the pathway porphyrin-containing compound metabolism; protoporphyrin-IX biosynthesis; coproporphyrinogen-III from 5-aminolevulinate: step 4/4. In terms of biological role, catalyzes the decarboxylation of four acetate groups of uroporphyrinogen-III to yield coproporphyrinogen-III. The polypeptide is Uroporphyrinogen decarboxylase (Chlamydia trachomatis serovar L2 (strain ATCC VR-902B / DSM 19102 / 434/Bu)).